Here is a 714-residue protein sequence, read N- to C-terminus: Calpain-1 catalytic subunit (714 aa).

The Calpain catalytic domain occupies 55 to 354; it reads LFRDEAFPPV…FTRLEICNLT (300 aa). Positions 109 and 114 each coordinate Ca(2+). Catalysis depends on residues Cys115, His272, and Asn296. The Ca(2+) site is built by Asp318 and Asp323. Position 354 is a phosphothreonine (Thr354). A domain III region spans residues 355–526; that stretch reads PDALKSQRVR…KKAGTQELDD (172 aa). The segment at 527–542 is linker; sequence QVQAILPDEQVLSEEE. Residues 543–713 are domain IV; sequence IDENFKALFR…LFKWLQLTMF (171 aa). EF-hand domains lie at 585 to 618, 615 to 650, and 680 to 714; these read FSLE…NRIR, NRIR…AGFK, and VRLE…TMFA. Residues Asp598, Asp600, Asn602, Lys604, Glu609, Asp628, Asp630, Ser632, Ser634, and Glu639 each coordinate Ca(2+).

Belongs to the peptidase C2 family. In terms of assembly, forms a heterodimer with a small (regulatory) subunit CAPNS1. It depends on Ca(2+) as a cofactor. Post-translationally, undergoes calcium-induced successive autoproteolytic cleavages that generate a membrane-bound 78 kDa active form and an intracellular 75 kDa active form. Calpastatin reduces with high efficiency the transition from 78 kDa to 75 kDa calpain forms.

Its subcellular location is the cytoplasm. The protein resides in the cell membrane. The enzyme catalyses Broad endopeptidase specificity.. Its activity is regulated as follows. Activated by micromolar concentrations of calcium and inhibited by calpastatin. Its function is as follows. Calcium-regulated non-lysosomal thiol-protease which catalyzes limited proteolysis of substrates involved in cytoskeletal remodeling and signal transduction. Proteolytically cleaves CTBP1. Cleaves and activates caspase-7 (CASP7). This is Calpain-1 catalytic subunit from Sus scrofa (Pig).